The chain runs to 327 residues: uncharacterized protein (327 aa).

Residues 12-84 enclose the S4 RNA-binding domain; it reads MRIDRYLTQQ…IPITILYEDD (73 aa). Asp137 is a catalytic residue.

This sequence belongs to the pseudouridine synthase RluA family.

It carries out the reaction a uridine in RNA = a pseudouridine in RNA. This is an uncharacterized protein from Chlorobaculum parvum (strain DSM 263 / NCIMB 8327) (Chlorobium vibrioforme subsp. thiosulfatophilum).